A 362-amino-acid polypeptide reads, in one-letter code: Protein MGF 360-2L (362 aa).

Belongs to the asfivirus MGF 360 family.

In terms of biological role, plays a role in virus cell tropism, and may be required for efficient virus replication in macrophages. This African swine fever virus (strain Badajoz 1971 Vero-adapted) (Ba71V) protein is Protein MGF 360-2L.